We begin with the raw amino-acid sequence, 576 residues long: (+)-alpha-terpineol synthase (576 aa).

R286, D323, D327, R466, and N469 together coordinate (2E)-geranyl diphosphate. Positions 323 and 327 each coordinate Mg(2+). The short motif at 323–327 (DDVYD) is the DDXXD motif element. The Mg(2+) site is built by N469, T473, and E477.

Belongs to the terpene synthase family. Tpsb subfamily. It depends on Mg(2+) as a cofactor. Mn(2+) is required as a cofactor.

It carries out the reaction (2E)-geranyl diphosphate + H2O = (R)-alpha-terpineol + diphosphate. Functionally, monoterpene synthase producing mainly (+)-alpha-terpineol (44%) and (-)-limonene (33.6%) and lower amounts of (E)-geraniol (5.9%), linalool (5.0%), myrcene (3.4%), (-)-alpha-pinene (3.3%), (+)-sabinene (3.0%) and alpha-terpinolene (1.6%). In Santalum album (White sandalwood), this protein is (+)-alpha-terpineol synthase.